We begin with the raw amino-acid sequence, 278 residues long: 1-acyl-sn-glycerol-3-phosphate acyltransferase beta (278 aa).

A signal peptide spans 1-23 (MELWPCLAAALLLLLLLVQLSRA). The Lumenal segment spans residues 24–29 (AEFYAK). Residues 30 to 50 (VALYCALCFTVSAVASLVCLL) form a helical membrane-spanning segment. Residues 51–121 (RHGGRTVENM…PERCVQIAKR (71 aa)) lie on the Cytoplasmic side of the membrane. The HXXXXD motif motif lies at 98–103 (HQSILD). Residues 122–142 (ELLFLGPVGLIMYLGGVFFIN) traverse the membrane as a helical segment. The Lumenal portion of the chain corresponds to 143 to 278 (RQRSSTAMTV…TAGSGVQPAQ (136 aa)). An EGTR motif motif is present at residues 172–175 (EGTR).

The protein belongs to the 1-acyl-sn-glycerol-3-phosphate acyltransferase family. As to expression, expressed predominantly in adipose tissue, pancreas and liver.

It localises to the endoplasmic reticulum membrane. The enzyme catalyses a 1-acyl-sn-glycero-3-phosphate + an acyl-CoA = a 1,2-diacyl-sn-glycero-3-phosphate + CoA. The catalysed reaction is 1-(9Z-octadecenoyl)-sn-glycero-3-phosphate + (9Z)-octadecenoyl-CoA = 1,2-di-(9Z-octadecenoyl)-sn-glycero-3-phosphate + CoA. It catalyses the reaction 1-(9Z-octadecenoyl)-sn-glycero-3-phosphate + hexadecanoyl-CoA = 1-(9Z)-octadecenoyl-2-hexadecanoyl-sn-glycero-3-phosphate + CoA. It carries out the reaction heptadecanoyl-CoA + 1-(9Z-octadecenoyl)-sn-glycero-3-phosphate = 1-(9Z)-octadecenoyl-2-heptadecanoyl-sn-glycero-3-phosphate + CoA. The enzyme catalyses 1-(9Z-octadecenoyl)-sn-glycero-3-phosphate + (9Z,12Z)-octadecadienoyl-CoA = 1-(9Z)-octadecenoyl-2-(9Z,12Z)-octadecadienoyl-sn-glycero-3-phosphate + CoA. The catalysed reaction is 1-(9Z-octadecenoyl)-sn-glycero-3-phosphate + tetradecanoyl-CoA = 1-(9Z)-octadecenoyl-2-tetradecanoyl-sn-glycero-3-phosphate + CoA. It catalyses the reaction pentadecanoyl-CoA + 1-(9Z-octadecenoyl)-sn-glycero-3-phosphate = 1-(9Z)-octadecenoyl-2-pentadecanoyl-sn-glycero-3-phosphate + CoA. It carries out the reaction 1-hexadecanoyl-sn-glycero-3-phosphate + (9Z)-octadecenoyl-CoA = 1-hexadecanoyl-2-(9Z-octadecenoyl)-sn-glycero-3-phosphate + CoA. The enzyme catalyses 1-tetradecanoyl-sn-glycerol 3-phosphate + (9Z)-octadecenoyl-CoA = 1-tetradecanoyl-2-(9Z)-octadecenoyl-sn-glycero-3-phosphate + CoA. The catalysed reaction is 1-(9Z,12Z,15Z)-octadecatrienoyl-sn-glycero-3-phosphate + (9Z)-octadecenoyl-CoA = 1-(9Z,12Z,15Z)-octadecatrienoyl-2-(9Z)-octadecenoyl-sn-glycero-3-phosphate + CoA. It catalyses the reaction 1-(6Z,9Z,12Z-octadecatrienoyl)-sn-glycero-3-phosphate + (9Z)-octadecenoyl-CoA = (6Z,9Z,12Z)-octadecatrienoyl-2-(9Z)-octadecenoyl-sn-glycero-3-phosphate + CoA. It carries out the reaction 1-eicosanoyl-sn-glycero-3-phosphate + (9Z)-octadecenoyl-CoA = 1-eicosanoyl-2-(9Z)-octadecenoyl-sn-glycero-3-phosphate + CoA. The enzyme catalyses 1-hexadecanoyl-sn-glycero-3-phosphate + octadecanoyl-CoA = 1-hexadecanoyl-2-octadecanoyl-sn-glycero-3-phosphate + CoA. The catalysed reaction is 1-hexadecanoyl-sn-glycero-3-phosphate + (5Z,8Z,11Z,14Z)-eicosatetraenoyl-CoA = 1-hexadecanoyl-2-(5Z,8Z,11Z,14Z-eicosatetraenoyl)-sn-glycero-3-phosphate + CoA. It catalyses the reaction 1-hexadecanoyl-sn-glycero-3-phosphate + hexadecanoyl-CoA = 1,2-dihexadecanoyl-sn-glycero-3-phosphate + CoA. It carries out the reaction 1-hexadecanoyl-sn-glycero-3-phosphate + tetradecanoyl-CoA = 1-hexadecanoyl-2-tetradecanoyl-sn-glycero-3-phosphate + CoA. The enzyme catalyses (11Z)-octadecenoyl-CoA + 1-(9Z-octadecenoyl)-sn-glycero-3-phosphate = 1-(9Z)-octadecenoyl-2-(11Z)-octadecenoyl-sn-glycero-3-phosphate + CoA. The protein operates within phospholipid metabolism; CDP-diacylglycerol biosynthesis; CDP-diacylglycerol from sn-glycerol 3-phosphate: step 2/3. In terms of biological role, converts 1-acyl-sn-glycerol-3-phosphate (lysophosphatidic acid or LPA) into 1,2-diacyl-sn-glycerol-3-phosphate (phosphatidic acid or PA) by incorporating an acyl moiety at the sn-2 position of the glycerol backbone. This chain is 1-acyl-sn-glycerol-3-phosphate acyltransferase beta (AGPAT2), found in Homo sapiens (Human).